The primary structure comprises 405 residues: Phosphopentomutase (405 aa).

Residues Asp10, Asp303, His308, Asp344, His345, and His356 each contribute to the Mn(2+) site.

It belongs to the phosphopentomutase family. Mn(2+) is required as a cofactor.

The protein resides in the cytoplasm. The catalysed reaction is 2-deoxy-alpha-D-ribose 1-phosphate = 2-deoxy-D-ribose 5-phosphate. The enzyme catalyses alpha-D-ribose 1-phosphate = D-ribose 5-phosphate. Its pathway is carbohydrate degradation; 2-deoxy-D-ribose 1-phosphate degradation; D-glyceraldehyde 3-phosphate and acetaldehyde from 2-deoxy-alpha-D-ribose 1-phosphate: step 1/2. Functionally, isomerase that catalyzes the conversion of deoxy-ribose 1-phosphate (dRib-1-P) and ribose 1-phosphate (Rib-1-P) to deoxy-ribose 5-phosphate (dRib-5-P) and ribose 5-phosphate (Rib-5-P), respectively. The chain is Phosphopentomutase from Shewanella sediminis (strain HAW-EB3).